We begin with the raw amino-acid sequence, 390 residues long: Bifunctional enzyme IspD/IspF (390 aa).

Residues 1 to 229 (MAAGRGERAG…RQDHAVFPDI (229 aa)) are 2-C-methyl-D-erythritol 4-phosphate cytidylyltransferase. The 2-C-methyl-D-erythritol 2,4-cyclodiphosphate synthase stretch occupies residues 230–390 (RTGNGYDVHS…TVIYPGEVPE (161 aa)). A divalent metal cation-binding residues include Asp-236 and His-238. 4-CDP-2-C-methyl-D-erythritol 2-phosphate is bound by residues 236–238 (DVH) and 262–263 (HS). A divalent metal cation is bound at residue His-270. Residues 284 to 286 (DIG), 360 to 363 (TTNE), Phe-367, and Arg-370 contribute to the 4-CDP-2-C-methyl-D-erythritol 2-phosphate site.

In the N-terminal section; belongs to the IspD/TarI cytidylyltransferase family. IspD subfamily. The protein in the C-terminal section; belongs to the IspF family. It depends on a divalent metal cation as a cofactor.

The catalysed reaction is 2-C-methyl-D-erythritol 4-phosphate + CTP + H(+) = 4-CDP-2-C-methyl-D-erythritol + diphosphate. It carries out the reaction 4-CDP-2-C-methyl-D-erythritol 2-phosphate = 2-C-methyl-D-erythritol 2,4-cyclic diphosphate + CMP. The protein operates within isoprenoid biosynthesis; isopentenyl diphosphate biosynthesis via DXP pathway; isopentenyl diphosphate from 1-deoxy-D-xylulose 5-phosphate: step 2/6. Its pathway is isoprenoid biosynthesis; isopentenyl diphosphate biosynthesis via DXP pathway; isopentenyl diphosphate from 1-deoxy-D-xylulose 5-phosphate: step 4/6. Its function is as follows. Bifunctional enzyme that catalyzes the formation of 4-diphosphocytidyl-2-C-methyl-D-erythritol from CTP and 2-C-methyl-D-erythritol 4-phosphate (MEP) (IspD), and catalyzes the conversion of 4-diphosphocytidyl-2-C-methyl-D-erythritol 2-phosphate (CDP-ME2P) to 2-C-methyl-D-erythritol 2,4-cyclodiphosphate (ME-CPP) with a corresponding release of cytidine 5-monophosphate (CMP) (IspF). In Brucella abortus biovar 1 (strain 9-941), this protein is Bifunctional enzyme IspD/IspF.